Here is a 495-residue protein sequence, read N- to C-terminus: Cobyric acid synthase (495 aa).

Residues 249 to 442 (KFIVKVPVVT…LHGVFDEPEA (194 aa)) enclose the GATase cobBQ-type domain. Catalysis depends on C330, which acts as the Nucleophile. H434 is an active-site residue.

Belongs to the CobB/CobQ family. CobQ subfamily.

Its pathway is cofactor biosynthesis; adenosylcobalamin biosynthesis. In terms of biological role, catalyzes amidations at positions B, D, E, and G on adenosylcobyrinic A,C-diamide. NH(2) groups are provided by glutamine, and one molecule of ATP is hydrogenolyzed for each amidation. This Aliivibrio fischeri (strain ATCC 700601 / ES114) (Vibrio fischeri) protein is Cobyric acid synthase.